Here is a 307-residue protein sequence, read N- to C-terminus: Protein rep (307 aa).

Tyrosine 219 is a binding site for DNA.

It belongs to the Gram-positive plasmids replication protein type 1 family.

The protein is Protein rep (repA) of Bacillus sp.